Here is a 591-residue protein sequence, read N- to C-terminus: Ferric-chelate reductase 1 (591 aa).

A helical transmembrane segment spans residues 6-26; the sequence is FTVSAFILLLHVSFVANYPSG. The region spanning 13–179 is the Reelin domain; that stretch reads LLLHVSFVAN…FTTPEATIAP (167 aa). 5 N-linked (GlcNAc...) asparagine glycosylation sites follow: Asn50, Asn85, Asn308, Asn321, and Asn353. The DOMON domain maps to 216 to 331; that stretch reads ERACVLLSFT…ASYYIFVADG (116 aa). A Cytochrome b561 domain is found at 335-533; the sequence is DGRIHKHSQQ…VGTEIILEIH (199 aa). Residues 372-392 traverse the membrane as a helical segment; it reads VHGALMFVAWMTTVSVGVLIA. Positions 373 and 413 each coordinate heme b. A run of 2 helical transmembrane segments spans residues 416–436 and 445–465; these read LMLTTSALTFIAFLLPFIYRG and HPYLGFIVMVLAVLQLLLAAF. His445 and His481 together coordinate heme b. 3 helical membrane passes run 490-510, 514-534, and 568-588; these read IIAVAAMFLGMDLPGLNLPGP, YAMIGFVAWHVGTEIILEIHA, and VVLAIYVCGNLTFLTMFLSAI.

The protein belongs to the FRRS1 family. Heme b serves as cofactor.

Its subcellular location is the membrane. Ferric-chelate reductases reduce Fe(3+) to Fe(2+) before its transport from the endosome to the cytoplasm. The protein is Ferric-chelate reductase 1 (FRRS1) of Bos taurus (Bovine).